We begin with the raw amino-acid sequence, 118 residues long: Ribosome-binding factor A (118 aa).

This sequence belongs to the RbfA family. In terms of assembly, monomer. Binds 30S ribosomal subunits, but not 50S ribosomal subunits or 70S ribosomes.

Its subcellular location is the cytoplasm. Its function is as follows. One of several proteins that assist in the late maturation steps of the functional core of the 30S ribosomal subunit. Associates with free 30S ribosomal subunits (but not with 30S subunits that are part of 70S ribosomes or polysomes). Required for efficient processing of 16S rRNA. May interact with the 5'-terminal helix region of 16S rRNA. The chain is Ribosome-binding factor A from Bacillus cereus (strain AH187).